A 410-amino-acid polypeptide reads, in one-letter code: Protein trichome birefringence-like 34 (410 aa).

Residues 13-33 (TSFHTIAAVLVAGLIFTAVFL) traverse the membrane as a helical; Signal-anchor for type II membrane protein segment. A GDS motif motif is present at residues 133 to 135 (GDS). The DCXHWCLPGXXDXWN motif signature appears at 383–397 (DCIHWCLPGVPDVWN).

Belongs to the PC-esterase family. TBL subfamily.

Its subcellular location is the golgi apparatus membrane. In terms of biological role, may act as a bridging protein that binds pectin and other cell wall polysaccharides. Probably involved in maintaining esterification of pectins. May be involved in the specific O-acetylation of cell wall polymers. This is Protein trichome birefringence-like 34 (TBL34) from Arabidopsis thaliana (Mouse-ear cress).